We begin with the raw amino-acid sequence, 231 residues long: 2-C-methyl-D-erythritol 4-phosphate cytidylyltransferase (231 aa).

It belongs to the IspD/TarI cytidylyltransferase family. IspD subfamily.

The enzyme catalyses 2-C-methyl-D-erythritol 4-phosphate + CTP + H(+) = 4-CDP-2-C-methyl-D-erythritol + diphosphate. It functions in the pathway isoprenoid biosynthesis; isopentenyl diphosphate biosynthesis via DXP pathway; isopentenyl diphosphate from 1-deoxy-D-xylulose 5-phosphate: step 2/6. In terms of biological role, catalyzes the formation of 4-diphosphocytidyl-2-C-methyl-D-erythritol from CTP and 2-C-methyl-D-erythritol 4-phosphate (MEP). The polypeptide is 2-C-methyl-D-erythritol 4-phosphate cytidylyltransferase (Lysinibacillus sphaericus (strain C3-41)).